The primary structure comprises 234 residues: ATP synthase subunit a 2 (234 aa).

The next 5 helical transmembrane spans lie at 20–40 (ATLI…WFVT), 78–98 (YLPF…LSVI), 107–127 (SLST…LYGV), 169–189 (VMSG…FFPV), and 194–214 (LGLL…MVFI).

It belongs to the ATPase A chain family. In terms of assembly, F-type ATPases have 2 components, CF(1) - the catalytic core - and CF(0) - the membrane proton channel. CF(1) has five subunits: alpha(3), beta(3), gamma(1), delta(1), epsilon(1). CF(0) has four main subunits: a, b, b' and c.

It is found in the cellular thylakoid membrane. Key component of the proton channel; it plays a direct role in the translocation of protons across the membrane. This is ATP synthase subunit a 2 from Acaryochloris marina (strain MBIC 11017).